The primary structure comprises 424 residues: L-glutamine:2-deoxy-scyllo-inosose aminotransferase (424 aa).

At K202 the chain carries N6-(pyridoxal phosphate)lysine.

Belongs to the DegT/DnrJ/EryC1 family. L-glutamine:2-deoxy-scyllo-inosose/scyllo-inosose aminotransferase subfamily. It depends on pyridoxal 5'-phosphate as a cofactor.

The enzyme catalyses 2-deoxy-L-scyllo-inosose + L-glutamine = 2-deoxy-scyllo-inosamine + 2-oxoglutaramate. The catalysed reaction is 3-amino-2,3-dideoxy-scyllo-inosose + L-glutamine = 2-deoxystreptamine + 2-oxoglutaramate. Its pathway is metabolic intermediate biosynthesis; 2-deoxystreptamine biosynthesis; 2-deoxystreptamine from D-glucose 6-phosphate: step 2/4. It functions in the pathway metabolic intermediate biosynthesis; 2-deoxystreptamine biosynthesis; 2-deoxystreptamine from D-glucose 6-phosphate: step 4/4. The protein operates within antibiotic biosynthesis; paromomycin biosynthesis. Catalyzes the PLP-dependent transamination of 2-deoxy-scyllo-inosose (2-DOI) to form 2-deoxy-scyllo-inosamine (2-DOIA) using L-glutamine as the amino donor. Also catalyzes the transamination of 3-amino-2,3-dideoxy-scyllo-inosose (keto-2-DOIA) into 2-deoxystreptamine (2-DOS). The sequence is that of L-glutamine:2-deoxy-scyllo-inosose aminotransferase (parS) from Streptomyces paromomycinus (Streptomyces rimosus subsp. paromomycinus).